Reading from the N-terminus, the 423-residue chain is Endochitinase 1 (423 aa).

The first 22 residues, 1-22, serve as a signal peptide directing secretion; that stretch reads MPSLFAQSLAIIATLQATLGLA. The region spanning 39–401 is the GH18 domain; the sequence is YVNAVYFTNW…GTSSNKLGGP (363 aa). 3 N-linked (GlcNAc...) asparagine glycosylation sites follow: Asn-74, Asn-78, and Asn-96. Residues 103-104 and 130-133 each bind chitin; these read GT and GGWT. The active-site Proton donor is Glu-172. Chitin is bound by residues Tyr-173 and 238-241; that span reads MAYD. Residue Asn-248 is glycosylated (N-linked (GlcNAc...) asparagine). Trp-378 is a binding site for chitin. Positions 380-423 are disordered; sequence ASSDRSGSQSLIGTSSNKLGGPDSTENLLNYPDSKYDNMRKQMA. The span at 383 to 407 shows a compositional bias: polar residues; sequence DRSGSQSLIGTSSNKLGGPDSTENL. The span at 413–423 shows a compositional bias: basic and acidic residues; it reads SKYDNMRKQMA.

Belongs to the glycosyl hydrolase 18 family. Chitinase class V subfamily.

The protein localises to the secreted. The enzyme catalyses Random endo-hydrolysis of N-acetyl-beta-D-glucosaminide (1-&gt;4)-beta-linkages in chitin and chitodextrins.. Functionally, secreted chitinase involved in the degradation of chitin, a component of the cell walls of fungi and exoskeletal elements of some animals (including worms and arthropods). Participates in the infection process and directly acts in the penetration process of the host cuticle. The sequence is that of Endochitinase 1 (chit1) from Metarhizium anisopliae (Entomophthora anisopliae).